Here is a 129-residue protein sequence, read N- to C-terminus: MARPKRTVKKKEKKNVPVGIVHIQATFNNTIVTFTDTRGNTISWASAGQSGFKGSRKSTPFAAQVAAEQAAKRAQDHGMRTVGIYVKGPGSGREAAMRAVNAAGFKVAFIRDITPIPHNGCRPPKRRRV.

The protein belongs to the universal ribosomal protein uS11 family. As to quaternary structure, part of the 30S ribosomal subunit. Interacts with proteins S7 and S18. Binds to IF-3.

In terms of biological role, located on the platform of the 30S subunit, it bridges several disparate RNA helices of the 16S rRNA. Forms part of the Shine-Dalgarno cleft in the 70S ribosome. The chain is Small ribosomal subunit protein uS11 from Nitratidesulfovibrio vulgaris (strain DSM 19637 / Miyazaki F) (Desulfovibrio vulgaris).